Here is a 244-residue protein sequence, read N- to C-terminus: Mitochondrial import inner membrane translocase subunit Tim21 (244 aa).

The N-terminal 18 residues, 1–18 (MICTLLRAVRCTERLHGC), are a transit peptide targeting the mitochondrion. The tract at residues 69-89 (VRSPQSAKEDGSKQVSVHRSQ) is disordered. Residues 108–128 (FTYLIVVLIGISITGGLFYTI) form a helical membrane-spanning segment.

Belongs to the TIM21 family. As to quaternary structure, component of the TIM23 complex. Component of the MITRAC (mitochondrial translation regulation assembly intermediate of cytochrome c oxidase complex) complex, the core components of this complex being COA3/MITRAC12 and COX14. Interacts with COA3 and MT-CO1/COX1.

It is found in the mitochondrion membrane. Functionally, participates in the translocation of transit peptide-containing proteins across the mitochondrial inner membrane. Also required for assembly of mitochondrial respiratory chain complex I and complex IV as component of the MITRAC (mitochondrial translation regulation assembly intermediate of cytochrome c oxidase complex) complex. Probably shuttles between the presequence translocase and respiratory-chain assembly intermediates in a process that promotes incorporation of early nuclear-encoded subunits into these complexes. The protein is Mitochondrial import inner membrane translocase subunit Tim21 (TIMM21) of Bos taurus (Bovine).